The sequence spans 516 residues: Cytochrome P450 monooxygenase dtxS2 (516 aa).

The chain crosses the membrane as a helical span at residues 23-43 (ILASVIVLLGLKVATILYTAF). An N-linked (GlcNAc...) asparagine glycan is attached at asparagine 187. A helical transmembrane segment spans residues 229–249 (VLVPLLVFPYISWLLVWWLLS). Cysteine 458 contributes to the heme binding site.

The protein belongs to the cytochrome P450 family. The cofactor is heme.

The protein resides in the membrane. The protein operates within secondary metabolite biosynthesis. Its function is as follows. Cytochrome P450 monooxygenase; part of the gene cluster that mediates the biosynthesis of destruxins, insecticidal cyclic hexadepsipeptides which induce flaccid paralysis and visceral muscle contraction in insects through targeting the calcium channels and vacuolar-type ATPases. The aldo-keto reductase dtxS3 converts alpha-ketoisocaproic acid from deaminated leucine into alpha-hydroxyisocaproic acid (HIC), which is the first substrate for destruxin assembly by dtxS1. L-aspartate decarboxylase dtxS4 converts aspartic acid into beta-alanine, the last substrate for the destruxin assembly line performed by dtxS1. The nonribosomal peptide synthetase dtxS1 synthesizes destruxins B and B2, whereas the cytochrome P450 monooxygenase dtxS2 is required to convert destruxin B into other destruxin derivatives, including destructins C, D, A and E. Destruxin E-diol (ED) is further produced in a non-enzymatic manner from destruxin E. Destruxins play an important role in virulence and escape from insect host immune defenses. The polypeptide is Cytochrome P450 monooxygenase dtxS2 (Metarhizium robertsii (strain ARSEF 23 / ATCC MYA-3075) (Metarhizium anisopliae (strain ARSEF 23))).